Consider the following 620-residue polypeptide: Lamin-B2 (620 aa).

The disordered stretch occupies residues Met1–Pro38. Positions Met1–Glu48 are head. Phosphothreonine occurs at positions 23 and 34. Ser37 carries the phosphoserine modification. The IF rod domain maps to Glu46–Leu402. Positions Glu49–Glu83 are coil 1A. Lys77 participates in a covalent cross-link: Glycyl lysine isopeptide (Lys-Gly) (interchain with G-Cter in SUMO2). Residue Lys81 is modified to N6-acetyllysine; alternate. Lys81 participates in a covalent cross-link: Glycyl lysine isopeptide (Lys-Gly) (interchain with G-Cter in SUMO2); alternate. Residues Val84–Leu95 form a linker 1 region. The tract at residues Tyr96–Glu229 is coil 1B. Residues Lys195 and Lys255 each participate in a glycyl lysine isopeptide (Lys-Gly) (interchain with G-Cter in SUMO2) cross-link. The linker 2 stretch occupies residues Val230 to Met256. The segment at Ala257 to Glu400 is coil 2. Phosphoserine occurs at positions 316 and 407. Residues Glu399–Leu464 are disordered. Residues Arg401–Met620 form a tail region. Residues Leu404–Leu431 show a composition bias toward low complexity. A glycan (O-linked (GlcNAc) threonine) is linked at Thr413. 4 positions are modified to phosphoserine: Ser420, Ser422, Ser424, and Ser426. At Arg433 the chain carries Omega-N-methylarginine. A Nuclear localization signal motif is present at residues Lys435–Glu440. Low complexity predominate over residues Pro444–Gly453. The region spanning Phe462–Lys579 is the LTD domain. Residue Lys489 forms a Glycyl lysine isopeptide (Lys-Gly) (interchain with G-Cter in SUMO2) linkage. At Ser497 the chain carries Phosphoserine. The interval Ser581–Met620 is disordered. The segment covering Asn588 to Glu601 has biased composition (acidic residues). The span at Asp609 to Met620 shows a compositional bias: polar residues. The residue at position 617 (Cys617) is a Cysteine methyl ester. Cys617 is lipidated: S-farnesyl cysteine. Positions Tyr618 to Met620 are cleaved as a propeptide — removed in mature form.

The protein belongs to the intermediate filament family. In terms of assembly, dimer. Lamin dimers then assemble into dimeric head-to-tail polymers. Ultimately, two head-to-tail polymers assemble laterally into a protofilament with a uniformly shaped rod of 3.5 nm in diameter. Interacts with TMEM43. B-type lamins undergo a series of modifications, such as farnesylation and phosphorylation. Increased phosphorylation of the lamins occurs before envelope disintegration and probably plays a role in regulating lamin associations. In terms of processing, phosphorylation plays a key role in lamin organization, subcellular localization and nuclear envelope disintegration. Phosphorylation by CDK1 at Ser-37 and Ser-407 at the onset of mitosis drives lamin disassembly and nuclear envelope breakdown.

It is found in the nucleus lamina. In terms of biological role, lamins are intermediate filament proteins that assemble into a filamentous meshwork, and which constitute the major components of the nuclear lamina, a fibrous layer on the nucleoplasmic side of the inner nuclear membrane. Lamins provide a framework for the nuclear envelope, bridging the nuclear envelope and chromatin, thereby playing an important role in nuclear assembly, chromatin organization, nuclear membrane and telomere dynamics. The structural integrity of the lamina is strictly controlled by the cell cycle, as seen by the disintegration and formation of the nuclear envelope in prophase and telophase, respectively. The polypeptide is Lamin-B2 (LMNB2) (Homo sapiens (Human)).